We begin with the raw amino-acid sequence, 201 residues long: Outer-membrane lipoprotein LolB (201 aa).

The N-terminal stretch at 1–18 (MKWCRLSIILMSLILLAG) is a signal peptide. A lipid anchor (N-palmitoyl cysteine) is attached at C19. A lipid anchor (S-diacylglycerol cysteine) is attached at C19.

It belongs to the LolB family. In terms of assembly, monomer.

Its subcellular location is the cell outer membrane. Plays a critical role in the incorporation of lipoproteins in the outer membrane after they are released by the LolA protein. This chain is Outer-membrane lipoprotein LolB, found in Nitrosococcus oceani (strain ATCC 19707 / BCRC 17464 / JCM 30415 / NCIMB 11848 / C-107).